The sequence spans 66 residues: UPF0337 protein SpyM3_1723 (66 aa).

The segment covering 1-10 (MSEEKLKSKI) has biased composition (basic and acidic residues). Residues 1–23 (MSEEKLKSKIEQASGGLKEGAGK) form a disordered region.

It belongs to the UPF0337 (CsbD) family.

This chain is UPF0337 protein SpyM3_1723, found in Streptococcus pyogenes serotype M3 (strain ATCC BAA-595 / MGAS315).